The sequence spans 63 residues: DNA-directed RNA polymerase 7 kDa subunit (63 aa).

It belongs to the poxviridae DNA-directed RNA polymerase 7 kDa subunit family. As to quaternary structure, the DNA-dependent RNA polymerase (vRNAP) consists of eight subunits encoded by early viral genes and termed according to their apparent molecular masses Rpo147, Rpo132, Rpo35, Rpo30, Rpo22, Rpo19, Rpo18, and Rpo7. The same holoenzyme, with the addition of the transcription-specificity factor RAP94, is used for early gene expression.

It localises to the virion. It catalyses the reaction RNA(n) + a ribonucleoside 5'-triphosphate = RNA(n+1) + diphosphate. In terms of biological role, part of the DNA-dependent RNA polymerase which catalyzes the transcription of viral DNA into RNA using the four ribonucleoside triphosphates as substrates. Responsible for the transcription of early, intermediate and late genes. DNA-dependent RNA polymerase associates with the early transcription factor (ETF), itself composed of OPG118 and OPG134, thereby allowing the early genes transcription. Late transcription, and probably also intermediate transcription, require newly synthesized RNA polymerase. This Monkeypox virus protein is DNA-directed RNA polymerase 7 kDa subunit (OPG090).